The chain runs to 233 residues: MAGKRTRKINEGVDPTKLYALTQAIGMVKERAVAKFDETIEVSMNLGVDPRHADQMVRGVVNLPNGTGRTVRVAVFARGAKADEAKAAGADVVGAEDLVEIVQGGKIEFDRCIATPDMMPLVGRLGKVLGPRGMMPNPKVGTVTMDVAGAVKASKGGAVEFRVEKAGIVHAGIGKASFDAKALEENIRAFADAVIKAKPAGAKGNYVKRVAISSTMGPGVKIEVGSVTAAPTA.

The protein belongs to the universal ribosomal protein uL1 family. In terms of assembly, part of the 50S ribosomal subunit.

Functionally, binds directly to 23S rRNA. The L1 stalk is quite mobile in the ribosome, and is involved in E site tRNA release. Protein L1 is also a translational repressor protein, it controls the translation of the L11 operon by binding to its mRNA. This is Large ribosomal subunit protein uL1 from Rhizobium etli (strain CIAT 652).